The following is a 314-amino-acid chain: N-acyl-aromatic-L-amino acid amidohydrolase (carboxylate-forming) B (314 aa).

Residues H19 and E22 each coordinate Zn(2+). Substrate-binding positions include R63 and 70–71 (NR). H116 contributes to the Zn(2+) binding site. The substrate site is built by E178 and Y289.

This sequence belongs to the AspA/AstE family. Aspartoacylase subfamily. As to quaternary structure, homotetramer. Requires Zn(2+) as cofactor.

The protein localises to the apical cell membrane. It is found in the cytoplasm. The catalysed reaction is an N-acyl-aromatic L-alpha-amino acid + H2O = an aromatic L-alpha-amino acid + a carboxylate. It catalyses the reaction an N-acetyl-L-cysteine-S-conjugate + H2O = an S-substituted L-cysteine + acetate. Plays an important role in deacetylating mercapturic acids in kidney proximal tubules. The protein is N-acyl-aromatic-L-amino acid amidohydrolase (carboxylate-forming) B (acy3.2) of Danio rerio (Zebrafish).